We begin with the raw amino-acid sequence, 190 residues long: Protein soem-1 (190 aa).

In terms of domain architecture, SH2 spans Y96–V190.

In terms of assembly, interacts with abl-1. As to expression, expressed in PQR, but not AQR, Q neuroblast descendents.

Its function is as follows. Functions downstream of migratory protein mig-13 and may play a role in the control of Q neuroblast migration during larval development. The protein is Protein soem-1 of Caenorhabditis elegans.